The primary structure comprises 469 residues: DNA (cytosine-5-)-methyltransferase M.ApeKI (469 aa).

The SAM-dependent MTase C5-type domain occupies 4-469 (YSTISLFSGA…EALAEVLDAV (466 aa)). Cys-93 is a catalytic residue.

The protein belongs to the class I-like SAM-binding methyltransferase superfamily. C5-methyltransferase family.

The catalysed reaction is a 2'-deoxycytidine in DNA + S-adenosyl-L-methionine = a 5-methyl-2'-deoxycytidine in DNA + S-adenosyl-L-homocysteine + H(+). In terms of biological role, cytosine methylase that recognizes the double-stranded sequence 5'-GC(A/T)GC-3', methylates C-5 position of the second cytosine on both strands, and protects the DNA from cleavage by the ApeKI endonuclease. The polypeptide is DNA (cytosine-5-)-methyltransferase M.ApeKI (Aeropyrum pernix (strain ATCC 700893 / DSM 11879 / JCM 9820 / NBRC 100138 / K1)).